A 124-amino-acid polypeptide reads, in one-letter code: Small ribosomal subunit protein uS12 (124 aa).

Asp89 carries the 3-methylthioaspartic acid modification.

This sequence belongs to the universal ribosomal protein uS12 family. Part of the 30S ribosomal subunit. Contacts proteins S8 and S17. May interact with IF1 in the 30S initiation complex.

Functionally, with S4 and S5 plays an important role in translational accuracy. Its function is as follows. Interacts with and stabilizes bases of the 16S rRNA that are involved in tRNA selection in the A site and with the mRNA backbone. Located at the interface of the 30S and 50S subunits, it traverses the body of the 30S subunit contacting proteins on the other side and probably holding the rRNA structure together. The combined cluster of proteins S8, S12 and S17 appears to hold together the shoulder and platform of the 30S subunit. The sequence is that of Small ribosomal subunit protein uS12 from Caldanaerobacter subterraneus subsp. tengcongensis (strain DSM 15242 / JCM 11007 / NBRC 100824 / MB4) (Thermoanaerobacter tengcongensis).